We begin with the raw amino-acid sequence, 281 residues long: 1-acyl-sn-glycerol-3-phosphate acyltransferase (281 aa).

3 helical membrane passes run 40-60 (IFVC…IMVL), 71-91 (LGNL…GIPI), and 110-130 (ASPI…VGVA). The short motif at 109 to 114 (HASPID) is the HXXXXD motif element.

This sequence belongs to the 1-acyl-sn-glycerol-3-phosphate acyltransferase family.

The protein localises to the membrane. The catalysed reaction is a 1-acyl-sn-glycero-3-phosphate + an acyl-CoA = a 1,2-diacyl-sn-glycero-3-phosphate + CoA. The protein operates within phospholipid metabolism; CDP-diacylglycerol biosynthesis; CDP-diacylglycerol from sn-glycerol 3-phosphate: step 2/3. In terms of biological role, converts lysophosphatidic acid (LPA) into phosphatidic acid by incorporating acyl moiety at the 2 position. This enzyme uses erucoyl-CoA as an acyl donor. The polypeptide is 1-acyl-sn-glycerol-3-phosphate acyltransferase (Limnanthes alba (White meadowfoam)).